The following is a 1054-amino-acid chain: Bifunctional cytochrome P450/NADPH--P450 reductase 2 (1054 aa).

The segment at 1–475 is cytochrome P450; the sequence is MKQASAIPQP…QADIKAETKP (475 aa). C403 lines the heme pocket. Over residues 462–480 the composition is skewed to basic and acidic residues; sequence QRKEQADIKAETKPKETKP. The segment at 462 to 482 is disordered; it reads QRKEQADIKAETKPKETKPKH. Residues 476 to 1053 form an NADPH--P450 reductase region; sequence KETKPKHGTP…RRYVKDVWTG (578 aa). In terms of domain architecture, Flavodoxin-like spans 486 to 625; it reads LLVLFGSNLG…HRESWENRFW (140 aa). FMN-binding positions include 492 to 497, 539 to 542, 573 to 575, and 581 to 583; these read SNLGTA, SYNG, CGN, and TYQ. The 234-residue stretch at 663–896 folds into the FAD-binding FR-type domain; sequence YGAFEGIVLE…RTPQSGFQMP (234 aa).

In the N-terminal section; belongs to the cytochrome P450 family. Requires FAD as cofactor. It depends on FMN as a cofactor. Heme b serves as cofactor.

The protein resides in the cytoplasm. It carries out the reaction an organic molecule + reduced [NADPH--hemoprotein reductase] + O2 = an alcohol + oxidized [NADPH--hemoprotein reductase] + H2O + H(+). The catalysed reaction is 2 oxidized [cytochrome P450] + NADPH = 2 reduced [cytochrome P450] + NADP(+) + H(+). Its function is as follows. Functions as a fatty acid monooxygenase. Catalyzes hydroxylation of a range of medium to long-chain fatty acids, with a preference for long-chain unsaturated and branched-chain fatty acids over saturated fatty acids. Hydroxylation of myristic acid occurs mainly at the omega-2 and omega-3 positions, in approximately equal proportions. Also displays a NADPH-dependent reductase activity in the C-terminal domain, which allows electron transfer from NADPH to the heme iron of the cytochrome P450 N-terminal domain. The protein is Bifunctional cytochrome P450/NADPH--P450 reductase 2 of Bacillus subtilis (strain 168).